A 370-amino-acid polypeptide reads, in one-letter code: Actin-related protein 2/3 complex subunit 1A-A (370 aa).

6 WD repeats span residues 6-45, 50-89, 140-179, 202-241, 244-284, and 322-365; these read FLLE…WVKG, EHNG…WKPT, PIRS…VDEK, SSGG…SVSQ, TEFL…TFVS, and LHQN…SYIQ.

This sequence belongs to the WD repeat ARPC1 family. As to quaternary structure, component of the Arp2/3 complex.

It is found in the cytoplasm. It localises to the cytoskeleton. Its subcellular location is the nucleus. Probably functions as a component of the Arp2/3 complex which is involved in regulation of actin polymerization and together with an activating nucleation-promoting factor (NPF) mediates the formation of branched actin networks. In addition to its role in the cytoplasmic cytoskeleton, the Arp2/3 complex also promotes actin polymerization in the nucleus, thereby regulating gene transcription and repair of damaged DNA. This Xenopus laevis (African clawed frog) protein is Actin-related protein 2/3 complex subunit 1A-A (arpc1a-a).